Here is a 457-residue protein sequence, read N- to C-terminus: MLIDAIHGAKMSTKLLVSLKVLVIQLNPQIGQVDQTIKRTWSILDKVTKSATYVKPDIILFPEFALTGYSFHARKDILPYVTKKDEGPSFELAKSISEKFQCYTIIGYPEDDDEQKLYNSALVVNPQGEQIFNYRKTFLYDTEMNWDCEENPEGFQTFPMDFSKCAKLSNEDSYNRDVTLKASIGICMDLSPYKFMAPFNHFEFSSFCVDNNVELILCPMAWLNSTSITDKQTLHNNSLLEAAKNKIAFALKEQGLPLAGSQGIYQLKIGDSQRTPRVPSDDSTSEYKDMDEPDMSNVNYWILRFFPFLYFKSRINWFKNSSLIESILGKTRMPLDHEYYKDGKHKEDTIDLLDSEEVIKDTVLEKTFLGTSLGQPWKFQGKNAILVLANRCGTEDGTTIFAGSSGIYKFNGKKPKGSQDDDESSLDSLNESVELLGNLGKGLEGAILREVQFEVFR.

The CN hydrolase domain occupies 19–453; that stretch reads LKVLVIQLNP…EGAILREVQF (435 aa). Catalysis depends on glutamate 63, which acts as the Proton acceptor. The active-site Proton donor is lysine 136. The active-site Nucleophile is the cysteine 187.

The protein belongs to the carbon-nitrogen hydrolase superfamily.

Deamidates N-terminal Asn and Gln. Component of a targeting complex in the N-end rule pathway. This chain is Protein N-terminal amidase (NTA1), found in Saccharomyces cerevisiae (strain ATCC 204508 / S288c) (Baker's yeast).